Reading from the N-terminus, the 42-residue chain is Iota-conotoxin-like R11.16 (42 aa).

4 disulfides stabilise this stretch: Cys5–Cys19, Cys12–Cys22, Cys18–Cys27, and Cys21–Cys36.

This sequence belongs to the conotoxin I1 superfamily. As to expression, expressed by the venom duct.

The protein localises to the secreted. Its function is as follows. Iota-conotoxins bind to voltage-gated sodium channels (Nav) and act as agonists by shifting the voltage-dependence of activation to more hyperpolarized levels. Produces general excitatory symptoms. The sequence is that of Iota-conotoxin-like R11.16 from Conus radiatus (Rayed cone).